A 230-amino-acid polypeptide reads, in one-letter code: Small ribosomal subunit protein uS3 (230 aa).

Residues 43–95 (VNRVIIYSARPKMISEERKAHLAKLLELKFGLEKPVIEVLPIENPNLDAHVIA) enclose the KH type-2 domain.

This sequence belongs to the universal ribosomal protein uS3 family. Part of the 30S ribosomal subunit.

In terms of biological role, binds the lower part of the 30S subunit head. This chain is Small ribosomal subunit protein uS3, found in Nanoarchaeum equitans (strain Kin4-M).